The sequence spans 234 residues: HTH-type transcriptional regulator ArcR (234 aa).

40–129 is an a nucleoside 3',5'-cyclic phosphate binding site; that stretch reads VRHYTKGQVI…MAFLCKANDD (90 aa). The HTH crp-type domain occupies 155–228; sequence KFAKDRIIKL…HKNWLVSKHL (74 aa). Positions 188–207 form a DNA-binding region, H-T-H motif; it reads IQLMSDMAGISRETAGHIIH.

It is found in the cytoplasm. Positively regulates the expression of the arcABDCR operon under anaerobic conditions, thus playing an essential role in arginine catabolism. May also control the expression of genes encoding proteins which are involved in anaerobic metabolism. Can bind cyclic AMP. This chain is HTH-type transcriptional regulator ArcR (arcR), found in Staphylococcus aureus (strain Mu50 / ATCC 700699).